The chain runs to 945 residues: UvrABC system protein A (945 aa).

Position 31-38 (31-38 (GLSGSGKS)) interacts with ATP. The segment at 254 to 281 (CPVCGHSISELEPKLFSFNNPAGACPTC) adopts a C4-type zinc-finger fold. 2 consecutive ABC transporter domains span residues 310–587 (WDRR…PDSL) and 607–937 (RDKK…HFLK). Residue 640–647 (GVSGSGKS) coordinates ATP. The segment at 740 to 766 (CEACQGDGVIKVEMHFLPDIYVPCDVC) adopts a C4-type zinc-finger fold.

This sequence belongs to the ABC transporter superfamily. UvrA family. In terms of assembly, forms a heterotetramer with UvrB during the search for lesions.

The protein resides in the cytoplasm. In terms of biological role, the UvrABC repair system catalyzes the recognition and processing of DNA lesions. UvrA is an ATPase and a DNA-binding protein. A damage recognition complex composed of 2 UvrA and 2 UvrB subunits scans DNA for abnormalities. When the presence of a lesion has been verified by UvrB, the UvrA molecules dissociate. In Pseudomonas aeruginosa (strain ATCC 15692 / DSM 22644 / CIP 104116 / JCM 14847 / LMG 12228 / 1C / PRS 101 / PAO1), this protein is UvrABC system protein A.